The primary structure comprises 488 residues: Sterol 14-demethylase (488 aa).

A helical membrane pass occupies residues 12–32; it reads TGLVIVATLVIAKLIFSFFTS. C433 contributes to the heme binding site.

It belongs to the cytochrome P450 family. Requires heme as cofactor. Expressed in leaves, roots, stems, siliques, flowers, flower buds and seedlings.

It localises to the membrane. The catalysed reaction is a 14alpha-methyl steroid + 3 reduced [NADPH--hemoprotein reductase] + 3 O2 = a Delta(14) steroid + formate + 3 oxidized [NADPH--hemoprotein reductase] + 4 H2O + 4 H(+). In terms of biological role, involved in sterol biosynthesis. Catalyzes the 14-alpha demethylation of obtusifoliol to 4 alpha-methyl-5 alpha-ergosta-8,14,24(28)-trien-3 beta-ol. This chain is Sterol 14-demethylase (CYP51G1), found in Arabidopsis thaliana (Mouse-ear cress).